We begin with the raw amino-acid sequence, 466 residues long: Cysteine--tRNA ligase (466 aa).

Cys29 is a binding site for Zn(2+). Residues 31 to 41 (ATVQAAPHIGH) carry the 'HIGH' region motif. Cys208, His233, and Glu237 together coordinate Zn(2+). Positions 264 to 268 (KMSKS) match the 'KMSKS' region motif. Residue Lys267 participates in ATP binding.

Belongs to the class-I aminoacyl-tRNA synthetase family. As to quaternary structure, monomer. The cofactor is Zn(2+).

The protein resides in the cytoplasm. It catalyses the reaction tRNA(Cys) + L-cysteine + ATP = L-cysteinyl-tRNA(Cys) + AMP + diphosphate. This is Cysteine--tRNA ligase from Streptomyces avermitilis (strain ATCC 31267 / DSM 46492 / JCM 5070 / NBRC 14893 / NCIMB 12804 / NRRL 8165 / MA-4680).